The chain runs to 225 residues: Single-pass membrane and coiled-coil domain-containing protein 3 (225 aa).

Positions 62 to 92 (IKENCDLIIQAIMKIQKELQKVDEALKDKLE) form a coiled coil. A helical transmembrane segment spans residues 155-175 (IGASLLGSIGVAVLGLGIDMI). The stretch at 183 to 207 (VEKTQLQAAIKSYEKHLVEFKSASE) forms a coiled coil.

Its subcellular location is the membrane. This Homo sapiens (Human) protein is Single-pass membrane and coiled-coil domain-containing protein 3 (SMCO3).